The primary structure comprises 116 residues: Holo-[acyl-carrier-protein] synthase (116 aa).

Residues Asp-5 and Glu-50 each coordinate Mg(2+).

It belongs to the P-Pant transferase superfamily. AcpS family. Mg(2+) serves as cofactor.

Its subcellular location is the cytoplasm. The catalysed reaction is apo-[ACP] + CoA = holo-[ACP] + adenosine 3',5'-bisphosphate + H(+). Transfers the 4'-phosphopantetheine moiety from coenzyme A to a Ser of acyl-carrier-protein. This is Holo-[acyl-carrier-protein] synthase from Campylobacter lari (strain RM2100 / D67 / ATCC BAA-1060).